The chain runs to 343 residues: L-threonine 3-dehydrogenase (343 aa).

Cys-40 is a binding site for Zn(2+). Active-site charge relay system residues include Thr-42 and His-45. Residues His-65, Glu-66, Cys-95, Cys-98, Cys-101, and Cys-109 each coordinate Zn(2+). Residues Ile-177, Asp-197, Arg-202, 264-266, and 288-289 contribute to the NAD(+) site; these read LGI and IY.

The protein belongs to the zinc-containing alcohol dehydrogenase family. As to quaternary structure, homotetramer. It depends on Zn(2+) as a cofactor.

It is found in the cytoplasm. It carries out the reaction L-threonine + NAD(+) = (2S)-2-amino-3-oxobutanoate + NADH + H(+). It functions in the pathway amino-acid degradation; L-threonine degradation via oxydo-reductase pathway; glycine from L-threonine: step 1/2. Functionally, catalyzes the NAD(+)-dependent oxidation of L-threonine to 2-amino-3-ketobutyrate. This chain is L-threonine 3-dehydrogenase, found in Vibrio vulnificus (strain YJ016).